Here is a 432-residue protein sequence, read N- to C-terminus: D-amino acid dehydrogenase (432 aa).

Position 3 to 17 (3 to 17 (VVILGSGVVGVASAW)) interacts with FAD.

It belongs to the DadA oxidoreductase family. The cofactor is FAD.

The catalysed reaction is a D-alpha-amino acid + A + H2O = a 2-oxocarboxylate + AH2 + NH4(+). It participates in amino-acid degradation; D-alanine degradation; NH(3) and pyruvate from D-alanine: step 1/1. Oxidative deamination of D-amino acids. This Shigella dysenteriae serotype 1 (strain Sd197) protein is D-amino acid dehydrogenase.